Consider the following 78-residue polypeptide: Putative Fe(2+) transport protein A (78 aa).

Belongs to the FeoA family.

Might be involved in Fe(2+) ion uptake. The polypeptide is Putative Fe(2+) transport protein A (Helicobacter pylori (strain J99 / ATCC 700824) (Campylobacter pylori J99)).